Consider the following 513-residue polypeptide: Autophagy-related protein 18 (513 aa).

One copy of the WD 1 repeat lies at 2 to 40 (SDLPIINFINFNQNGTCISIGTSQGFKIFNCEPFGRFYQ). The segment at 167 to 225 (NNINIKKSDAAEDPLRKDHFAYDPSDHSHPQSTTESTSNNHNRTYSSGNNNNTNSNPNK) is disordered. A compositionally biased stretch (basic and acidic residues) spans 172-195 (KKSDAAEDPLRKDHFAYDPSDHSH). Positions 205-225 (NNHNRTYSSGNNNNTNSNPNK) are enriched in low complexity. The WD 2 repeat unit spans residues 248-288 (AHKGEIAALKLSADGTLLATASEKGTIIRVFNVENGSKVYQ). Residues 289 to 292 (FRRG) are necessary for proper localization to vacuole membrane. Positions 289 to 293 (FRRGT) match the L/FRRG motif motif. One copy of the WD 3 repeat lies at 293–332 (TYSTKISSLSFSKDNQFLAVCSSSKTVHIFKLGEKIIDNT). The interval 333 to 398 (KPNELNSDDD…TVGRMIRKSS (66 aa)) is disordered. Residues 338–369 (NSDDDMDDDLLPQFENGDDEEEVDEETLDEEA) are compositionally biased toward acidic residues.

This sequence belongs to the WD repeat PROPPIN family. In terms of assembly, component of the PI(3,5)P2 regulatory complex. Interacts with ATG2 and ATG9. The ATG2-ATG18 complex is essential for autophagosome formation.

The protein resides in the preautophagosomal structure membrane. The protein localises to the vacuole membrane. Its subcellular location is the endosome membrane. In terms of biological role, component of the PI(3,5)P2 regulatory complex that regulates both the synthesis and turnover of phosphatidylinositol 3,5-bisphosphate (PtdIns(3,5)P2). Plays an important role in osmotically-induced vacuole fragmentation. Required for cytoplasm to vacuole transport (Cvt) vesicle formation, pexophagy and starvation-induced autophagy. Involved in correct ATG9 trafficking to the pre-autophagosomal structure. With ATG2, protects ATG8 from ATG4-mediated cleavage. The chain is Autophagy-related protein 18 from Kluyveromyces marxianus (strain DMKU3-1042 / BCC 29191 / NBRC 104275) (Yeast).